A 524-amino-acid polypeptide reads, in one-letter code: DEAD-box ATP-dependent RNA helicase CshA (524 aa).

Positions 1–29 (MKFNELNLSADLLAEIEKAGFVEASPIQE) match the Q motif motif. The 171-residue stretch at 32–202 (IPLALEGKDV…VQFMKAPEHV (171 aa)) folds into the Helicase ATP-binding domain. 45 to 52 (AQTGTGKT) lines the ATP pocket. A DEAD box motif is present at residues 150–153 (DEAD). Positions 213–373 (LVDQYYIRVK…GLKPASVEES (161 aa)) constitute a Helicase C-terminal domain. Positions 440–524 (EKPLPFKPSG…GFVIRNKGDK (85 aa)) are disordered. Over residues 463-498 (RRGDDRRERDRRGNGRRDEFKKGSRGNDRFDKEKRY) the composition is skewed to basic and acidic residues.

This sequence belongs to the DEAD box helicase family. CshA subfamily. As to quaternary structure, oligomerizes, may be a member of the RNA degradosome.

The protein resides in the cytoplasm. It carries out the reaction ATP + H2O = ADP + phosphate + H(+). DEAD-box RNA helicase possibly involved in RNA degradation. Unwinds dsRNA in both 5'- and 3'-directions, has RNA-dependent ATPase activity. This Streptococcus pneumoniae serotype 4 (strain ATCC BAA-334 / TIGR4) protein is DEAD-box ATP-dependent RNA helicase CshA.